The primary structure comprises 601 residues: Sodium-dependent phosphate transport protein 2C (601 aa).

Residues 1–75 (MPNSLAGDQV…HQVVSGFLKA (75 aa)) lie on the Cytoplasmic side of the membrane. Serine 4 carries the post-translational modification Phosphoserine. The helical transmembrane segment at 76-96 (CGLLGSLYFFICSLDILSSAF) threads the bilayer. Over 97-110 (QLLGSKMAGDIFKD) the chain is Extracellular. Residues 111 to 131 (NVVLSNPVAGLVIGVVVTVLV) form a helical membrane-spanning segment. The Cytoplasmic segment spans residues 132-187 (QSSSTSSSIVVSMVASKSLTVQASVPIIMGVNVGTSITSTLVSMAQSGDRDEFQRA). A helical transmembrane segment spans residues 188 to 208 (FGGSAVHGIFNWLTVLVLLPL). At 209–324 (ENATAALERL…FAGSELTDLA (116 aa)) the chain is on the extracellular side. N-linked (GlcNAc...) asparagine glycans are attached at residues asparagine 210, asparagine 264, asparagine 267, and asparagine 299. Cysteines 275 and 311 form a disulfide. The chain crosses the membrane as a helical span at residues 325–345 (VGFILLAGSLLVLCVCLVLIV). At 346-369 (KLLNSVLRGRIAQAVKTVINADFP) the chain is on the cytoplasmic side. A helical membrane pass occupies residues 370–390 (FPFGWLSGYLAILVGAGLTFL). Topologically, residues 391–447 (LQSSSVFTAAIVPLMGVGVINLERAYPLFLGSNIGTTTTALLAALASPADTLLFAVQ) are extracellular. Residues 448–468 (VALIHFFFNLAGILLWYLVPV) form a helical membrane-spanning segment. Topologically, residues 469–487 (LRLPIPLAKRFGDLTAQYR) are cytoplasmic. The helical transmembrane segment at 488-508 (WVAIVYLLLTFLLLPLAAFGL) threads the bilayer. Over 509 to 512 (SLAG) the chain is Extracellular. Residues 513–533 (GSVLAAVGGPLVGLVLLIILV) traverse the membrane as a helical segment. Residues 534–601 (NVLQRHRPSW…NPQVIASQQL (68 aa)) are Cytoplasmic-facing.

It belongs to the SLC34A transporter family. Highly expressed in the kidney. Not found in any of the other tested tissues.

The protein localises to the apical cell membrane. It carries out the reaction 2 Na(+)(out) + phosphate(out) = 2 Na(+)(in) + phosphate(in). Involved in actively transporting phosphate into cells via Na(+) cotransport in the renal brush border membrane. The cotransport has a Na(+):Pi stoichiometry of 2:1 and is electroneutral. The chain is Sodium-dependent phosphate transport protein 2C (Slc34a3) from Rattus norvegicus (Rat).